The sequence spans 1707 residues: Histone-lysine N-methyltransferase SETD1A (1707 aa).

Residues 60–89 (LQDPRCHVRSKNRDFSLPVPKFKLDEFYIG) are interaction with WDR82. Residues 84-172 (DEFYIGQIPL…NIIHAQLDIK (89 aa)) form the RRM domain. Disordered stretches follow at residues 194–308 (PTGG…YQDA), 331–363 (TAAT…RSSD), 381–486 (SYPP…AQHS), 506–655 (LASD…PPPH), 834–854 (AKPF…EKTK), 891–1251 (PSFK…GTEV), and 1264–1293 (ARRG…RPLL). Positions 239 to 277 (NGTPCSQDTSFSSSRQDTPSSFGQFTPQSSQGTPYTSRG) are enriched in polar residues. Low complexity-rich tracts occupy residues 278 to 295 (STPY…TSTS) and 331 to 357 (TAAT…SSSS). Residues 430-440 (SEAPPPEPPEP) are compositionally biased toward pro residues. 2 positions are modified to phosphoserine: serine 459 and serine 464. Positions 459 to 473 (SPRPASPARSGSPAP) are enriched in low complexity. The span at 474 to 486 (ETTNESVPFAQHS) shows a compositional bias: polar residues. A phosphoserine mark is found at serine 508 and serine 565. Residues 568–578 (ANGQNQASPCS) show a composition bias toward polar residues. Composition is skewed to pro residues over residues 593–617 (SPPP…PPPY) and 624–655 (GYPP…PPPH). Positions 844 to 854 (QAKEEDKEKTK) are enriched in basic and acidic residues. A Phosphoserine modification is found at serine 915. Acidic residues-rich tracts occupy residues 918–927 (AEEDEDDPEQ) and 976–992 (KDEE…DREE). Positions 993-1002 (AVDTTKKETE) are enriched in basic and acidic residues. A compositionally biased stretch (acidic residues) spans 1003–1012 (VSDGEDEESD). Residues 1032 to 1060 (DSESSSSSSSSSSSSSSSSSSSSSSSSES) are compositionally biased toward low complexity. The segment covering 1077–1094 (ASPPPREVPVPTPAPVEV) has biased composition (pro residues). Phosphoserine is present on serine 1103. Pro residues predominate over residues 1127–1145 (PSAPLRPPEPPAGPPAPAP). Positions 1275–1284 (EDSEATETSD) are enriched in acidic residues. The short motif at 1299 to 1303 (EHNYA) is the HCFC1-binding motif (HBM) element. Disordered regions lie at residues 1307-1417 (KPTP…AYEP) and 1472-1499 (NLTT…SEGY). Over residues 1308–1323 (PTPPAPALRPPEPVPA) the composition is skewed to pro residues. Positions 1360-1377 (EGEEEGEEEGEEEEEESS) are enriched in acidic residues. Basic residues predominate over residues 1390–1403 (RRRSLRSHARRRRP). The span at 1404 to 1414 (PPPPPPPPPRA) shows a compositional bias: pro residues. The interval 1415–1450 (YEPRSEFEQMTILYDIWNSGLDSEDMSYLRLTYERL) is interaction with CFP1. The interaction with ASH2L, RBBP5 and WDR5 stretch occupies residues 1450 to 1537 (LLQQTSGADW…GTNRVLSERR (88 aa)). The WDR5 interaction motif (WIN) signature appears at 1492 to 1497 (GSARSE). The RxxxRR motif signature appears at 1537–1542 (RSEQRR). In terms of domain architecture, SET spans 1568–1685 (KKLRFGRSRI…VDEEITYDYK (118 aa)). Tyrosine 1684 is a binding site for S-adenosyl-L-methionine. The Post-SET domain occupies 1691 to 1707 (NKIPCLCGTESCRGSLN).

This sequence belongs to the class V-like SAM-binding methyltransferase superfamily. Component of the SET1A/COMPASS complex composed of the catalytic subunit SETD1A, WDR5, WDR82, RBBP5, ASH2L/ASH2, CXXC1/CFP1, HCFC1 and DPY30 homotrimer. Forms a core complex with the evolutionary conserved subcomplex WRAD composed of WDR5, RBBP5, ASH2L/ASH2 and DPY30 subunits; WRAD differentially stimulates the methyltransferase activity. Interacts with BOD1L1 (via COMPASS-Shg1 domain) at replication forks. Interacts with HCFC1. Interacts with ASH2/ASH2L. Interacts with CXXC1/CFP1. Interacts with RBBP5. Interacts (via N-terminal region) with WDR82; the interaction is direct. Interacts (via the RRM domain) with hyperphosphorylated C-terminal domain (CTD) of RNA polymerase II large subunit (POLR2A) only in the presence of WDR82. Binds specifically to CTD heptad repeats phosphorylated on 'Ser-5' of each heptad. Interacts with ZNF335. Interacts with SUPT6H. Interacts with NAP1L1. Interacts (via WIN motif) with WDR5.

It is found in the nucleus speckle. The protein resides in the chromosome. It localises to the cytoplasm. The catalysed reaction is L-lysyl(4)-[histone H3] + S-adenosyl-L-methionine = N(6)-methyl-L-lysyl(4)-[histone H3] + S-adenosyl-L-homocysteine + H(+). The enzyme catalyses N(6)-methyl-L-lysyl(4)-[histone H3] + S-adenosyl-L-methionine = N(6),N(6)-dimethyl-L-lysyl(4)-[histone H3] + S-adenosyl-L-homocysteine + H(+). It carries out the reaction N(6),N(6)-dimethyl-L-lysyl(4)-[histone H3] + S-adenosyl-L-methionine = N(6),N(6),N(6)-trimethyl-L-lysyl(4)-[histone H3] + S-adenosyl-L-homocysteine + H(+). Histone methyltransferase that catalyzes methyl group transfer from S-adenosyl-L-methionine to the epsilon-amino group of 'Lys-4' of histone H3 (H3K4) via a non-processive mechanism. Part of chromatin remodeling machinery, forms H3K4me1, H3K4me2 and H3K4me3 methylation marks at active chromatin sites where transcription and DNA repair take place. Responsible for H3K4me3 enriched promoters and transcriptional programming of inner mass stem cells and neuron progenitors during embryogenesis. Required for H3K4me1 mark at stalled replication forks. Mediates FANCD2-dependent nucleosome remodeling and RAD51 nucleofilaments stabilization at reversed forks, protecting them from nucleolytic degradation. Does not methylate 'Lys-4' of histone H3 if the neighboring 'Lys-9' residue is already methylated. Binds RNAs involved in RNA processing and the DNA damage response. In Homo sapiens (Human), this protein is Histone-lysine N-methyltransferase SETD1A (SETD1A).